Consider the following 305-residue polypeptide: RNA-binding protein with serine-rich domain 1 (305 aa).

A compositionally biased stretch (basic residues) spans 1–10 (MDLSGVKKKS). Residues 1–161 (MDLSGVKKKS…KRRSPSPKPT (161 aa)) are necessary for interaction with SRP54, nuclear localization and exon-skipping. Positions 1 to 170 (MDLSGVKKKS…TKVHIGRLTR (170 aa)) are disordered. The necessary for interaction with the cleaved p110 isoform of CDC2L1 stretch occupies residues 1–220 (MDLSGVKKKS…ENPDEAEKAL (220 aa)). Residues Lys-7 and Lys-15 each participate in a glycyl lysine isopeptide (Lys-Gly) (interchain with G-Cter in SUMO2) cross-link. Basic and acidic residues predominate over residues 33–59 (DRSDEKSKDRSKDKGATKESSEKDRGR). Ser-53 is subject to Phosphoserine. Low complexity predominate over residues 68–126 (ASSGSSSTRSRSSSTSSSGSSTSTGSSSGSSSSSASSRSGSSSTSRSSSSSSSSGSPSP). Residues 69–121 (SSGSSSTRSRSSSTSSSGSSTSTGSSSGSSSSSASSRSGSSSTSRSSSSSSSS) form a necessary for interactions with UPF2 and UPF3B and UPF2-dependent NMD region. Composition is skewed to basic residues over residues 127–143 (SRRRHDNRRRSRSKSKP) and 151–167 (RKRRSPSPKPTKVHIGR). Residues Ser-155 and Ser-157 each carry the phosphoserine modification. The interval 156–242 (PSPKPTKVHI…ITATAVLAPW (87 aa)) is necessary for interaction with PNN and exon-skipping. Residues 159 to 244 (KPTKVHIGRL…ATAVLAPWPR (86 aa)) are interaction with SAP18 and ACIN1. Phosphothreonine is present on Thr-161. The RRM domain occupies 161-240 (TKVHIGRLTR…QEITATAVLA (80 aa)). Lys-218 is modified (N6-acetyllysine). The tract at residues 238 to 305 (VLAPWPRPPP…RSRSSSNSSR (68 aa)) is necessary for interaction with TRA2B, nuclear localization and exon-skipping. The interval 240-305 (APWPRPPPRR…RSRSSSNSSR (66 aa)) is disordered. Residues 242 to 261 (WPRPPPRRFSPPRRMLPPLP) are compositionally biased toward pro residues. Positions 266-298 (SPPRMRRRSRSPRRRSPARRRSRSPGRRRHRSR) are enriched in basic residues.

Belongs to the splicing factor SR family. Found in mRNA splicing-dependent exon junction complexes (EJC). Found in a post-splicing complex with NXF1, RBM8A, UPF1, UPF2, UPF3A, UPF3B and RNPS1. Component of the heterotrimeric ASAP (apoptosis- and splicing-associated protein) and PSAP complexes consisting of RNPS1, SAP18 and either ACIN1 or PNN, respectively; the ASAP and PSAP complexes probably are formed mutually exclusive. Component of the active spliceosome. Associates with polysomes. Interacts with the cleaved p110 isoform of CDC2L1, CSNK2A1, PNN, SART3, SRP54, SRRM1 and TRA2B/SFRS10. Phosphorylated on one or more of the four Ser/Thr residues (Ser-43, Thr-49, Ser-52 or Ser-53). Ser-53 phosphorylation site is important for splicing and translation stimulation activity in vitro.

The protein resides in the nucleus. The protein localises to the nucleus speckle. Its subcellular location is the cytoplasm. Its function is as follows. Part of pre- and post-splicing multiprotein mRNP complexes. Auxiliary component of the splicing-dependent multiprotein exon junction complex (EJC) deposited at splice junction on mRNAs. The EJC is a dynamic structure consisting of core proteins and several peripheral nuclear and cytoplasmic associated factors that join the complex only transiently either during EJC assembly or during subsequent mRNA metabolism. Component of the ASAP and PSAP complexes which bind RNA in a sequence-independent manner and are proposed to be recruited to the EJC prior to or during the splicing process and to regulate specific excision of introns in specific transcription subsets. The ASAP complex can inhibit RNA processing during in vitro splicing reactions. The ASAP complex promotes apoptosis and is disassembled after induction of apoptosis. Enhances the formation of the ATP-dependent A complex of the spliceosome. Involved in both constitutive splicing and, in association with SRP54 and TRA2B/SFRS10, in distinctive modulation of alternative splicing in a substrate-dependent manner. Involved in the splicing modulation of BCL2L1/Bcl-X (and probably other apoptotic genes); specifically inhibits formation of proapoptotic isoforms such as Bcl-X(S); the activity is different from the established EJC assembly and function. Participates in mRNA 3'-end cleavage. Involved in UPF2-dependent nonsense-mediated decay (NMD) of mRNAs containing premature stop codons. Also mediates increase of mRNA abundance and translational efficiency. Binds spliced mRNA 20-25 nt upstream of exon-exon junctions. The chain is RNA-binding protein with serine-rich domain 1 (RNPS1) from Bos taurus (Bovine).